The chain runs to 150 residues: MEDYALTFGINPFIALMIQPIVTMTVVDNQGLGLPVDIQHKAKPSPKASQMLPPDLGPPSFQNLLSPSEKLEPWDPGMRKLTVQTCGLTFIHPAGHGLCHPTAEASAETLSSTALNRPSVREGACNEKSTENKKPQDSVLWSHSRWFQGN.

The interval proline 118–aspartate 137 is disordered. The span at alanine 124–glutamine 136 shows a compositional bias: basic and acidic residues.

This sequence belongs to the reduced folate carrier (RFC) transporter (TC 2.A.48) family.

In Homo sapiens (Human), this protein is Putative solute carrier family 19 member 4.